Here is an 875-residue protein sequence, read N- to C-terminus: Valine--tRNA ligase (875 aa).

The 'HIGH' region motif lies at 44–54 (PNVTGKLHLGH). A 'KMSKS' region motif is present at residues 520-524 (KMSKS). K523 provides a ligand contact to ATP. A coiled-coil region spans residues 804–875 (LEGLINIEEE…VRARLAQLKQ (72 aa)).

Belongs to the class-I aminoacyl-tRNA synthetase family. ValS type 1 subfamily. Monomer.

It localises to the cytoplasm. The catalysed reaction is tRNA(Val) + L-valine + ATP = L-valyl-tRNA(Val) + AMP + diphosphate. Functionally, catalyzes the attachment of valine to tRNA(Val). As ValRS can inadvertently accommodate and process structurally similar amino acids such as threonine, to avoid such errors, it has a 'posttransfer' editing activity that hydrolyzes mischarged Thr-tRNA(Val) in a tRNA-dependent manner. This chain is Valine--tRNA ligase, found in Anoxybacillus flavithermus (strain DSM 21510 / WK1).